Here is a 437-residue protein sequence, read N- to C-terminus: Probable exopolygalacturonase C (437 aa).

A signal peptide spans 1–21 (MLITKTAFLAFLLSSVPLAHG). Asn-25, Asn-42, Asn-82, Asn-99, and Asn-149 each carry an N-linked (GlcNAc...) asparagine glycan. 2 PbH1 repeats span residues 215–236 (GTNIRISDSIMYNGDDAIAVGS) and 238–259 (SHNIVFERNTIGYQSHGMSIGS). The Proton donor role is filled by Asp-229. His-253 is an active-site residue. A glycan (N-linked (GlcNAc...) asparagine) is linked at Asn-269. PbH1 repeat units lie at residues 270-291 (ITNLRFEDVTVIDALYAARFKS) and 299-320 (VKNVTWKNIRVYNVTFPIFVTQ). 2 N-linked (GlcNAc...) asparagine glycosylation sites follow: Asn-301 and Asn-311. A disulfide bond links Cys-386 and Cys-392. Asn-428 and Asn-431 each carry an N-linked (GlcNAc...) asparagine glycan.

The protein belongs to the glycosyl hydrolase 28 family.

It localises to the secreted. It carries out the reaction [(1-&gt;4)-alpha-D-galacturonosyl](n) + H2O = alpha-D-galacturonate + [(1-&gt;4)-alpha-D-galacturonosyl](n-1). Specific in hydrolyzing the terminal glycosidic bond of polygalacturonic acid and oligogalacturonates. In Aspergillus flavus (strain ATCC 200026 / FGSC A1120 / IAM 13836 / NRRL 3357 / JCM 12722 / SRRC 167), this protein is Probable exopolygalacturonase C (pgxC).